The following is a 477-amino-acid chain: Bifunctional protein HldE (477 aa).

The tract at residues 1–318 (MKVTLPEFER…ENAVRGRADT (318 aa)) is ribokinase. 195–198 (NLSE) serves as a coordination point for ATP. The active site involves Asp-264. Residues 344–477 (MTNGVFDILH…IKKIQKDSDK (134 aa)) are cytidylyltransferase.

In the N-terminal section; belongs to the carbohydrate kinase PfkB family. The protein in the C-terminal section; belongs to the cytidylyltransferase family. Homodimer.

The enzyme catalyses D-glycero-beta-D-manno-heptose 7-phosphate + ATP = D-glycero-beta-D-manno-heptose 1,7-bisphosphate + ADP + H(+). The catalysed reaction is D-glycero-beta-D-manno-heptose 1-phosphate + ATP + H(+) = ADP-D-glycero-beta-D-manno-heptose + diphosphate. It functions in the pathway nucleotide-sugar biosynthesis; ADP-L-glycero-beta-D-manno-heptose biosynthesis; ADP-L-glycero-beta-D-manno-heptose from D-glycero-beta-D-manno-heptose 7-phosphate: step 1/4. The protein operates within nucleotide-sugar biosynthesis; ADP-L-glycero-beta-D-manno-heptose biosynthesis; ADP-L-glycero-beta-D-manno-heptose from D-glycero-beta-D-manno-heptose 7-phosphate: step 3/4. Functionally, catalyzes the phosphorylation of D-glycero-D-manno-heptose 7-phosphate at the C-1 position to selectively form D-glycero-beta-D-manno-heptose-1,7-bisphosphate. In terms of biological role, catalyzes the ADP transfer from ATP to D-glycero-beta-D-manno-heptose 1-phosphate, yielding ADP-D-glycero-beta-D-manno-heptose. In Citrobacter koseri (strain ATCC BAA-895 / CDC 4225-83 / SGSC4696), this protein is Bifunctional protein HldE.